Here is a 743-residue protein sequence, read N- to C-terminus: Phosphoribosylformylglycinamidine synthase subunit PurL (743 aa).

Residue His-50 is part of the active site. ATP-binding residues include Tyr-53 and Lys-92. Residue Glu-94 participates in Mg(2+) binding. Residues 95–98 and Arg-117 contribute to the substrate site; that span reads SHNH. His-96 serves as the catalytic Proton acceptor. Mg(2+) is bound at residue Asp-118. Residue Gln-241 participates in substrate binding. Position 269 (Asp-269) interacts with Mg(2+). 313 to 315 provides a ligand contact to substrate; sequence ESQ. 2 residues coordinate ATP: Asp-495 and Gly-532. Asn-533 is a Mg(2+) binding site. Ser-535 is a substrate binding site.

Belongs to the FGAMS family. Monomer. Part of the FGAM synthase complex composed of 1 PurL, 1 PurQ and 2 PurS subunits.

It is found in the cytoplasm. The catalysed reaction is N(2)-formyl-N(1)-(5-phospho-beta-D-ribosyl)glycinamide + L-glutamine + ATP + H2O = 2-formamido-N(1)-(5-O-phospho-beta-D-ribosyl)acetamidine + L-glutamate + ADP + phosphate + H(+). It participates in purine metabolism; IMP biosynthesis via de novo pathway; 5-amino-1-(5-phospho-D-ribosyl)imidazole from N(2)-formyl-N(1)-(5-phospho-D-ribosyl)glycinamide: step 1/2. Functionally, part of the phosphoribosylformylglycinamidine synthase complex involved in the purines biosynthetic pathway. Catalyzes the ATP-dependent conversion of formylglycinamide ribonucleotide (FGAR) and glutamine to yield formylglycinamidine ribonucleotide (FGAM) and glutamate. The FGAM synthase complex is composed of three subunits. PurQ produces an ammonia molecule by converting glutamine to glutamate. PurL transfers the ammonia molecule to FGAR to form FGAM in an ATP-dependent manner. PurS interacts with PurQ and PurL and is thought to assist in the transfer of the ammonia molecule from PurQ to PurL. This chain is Phosphoribosylformylglycinamidine synthase subunit PurL, found in Rhizobium etli (strain CIAT 652).